The following is a 253-amino-acid chain: Prolactin-7A2 (253 aa).

An N-terminal signal peptide occupies residues 1 to 30 (MSFSFSQPCPSGALLLVVVSSLLLWENVAS). N-linked (GlcNAc...) asparagine glycosylation is found at asparagine 36, asparagine 103, and asparagine 135. 2 cysteine pairs are disulfide-bonded: cysteine 101–cysteine 218 and cysteine 235–cysteine 244.

Belongs to the somatotropin/prolactin family. In terms of tissue distribution, expression restricted to the placental tissue. Expressed only in the spongiotrophoblasts.

The protein localises to the secreted. The protein is Prolactin-7A2 (Prl7a2) of Mus musculus (Mouse).